An 822-amino-acid polypeptide reads, in one-letter code: A disintegrin and metallopeptidase domain 3 (822 aa).

The N-terminal stretch at 1 to 16 (MLPLFLVLSYLGQVIA) is a signal peptide. Residues 187–384 (RILRIKIIMD…PELDCLRNTS (198 aa)) enclose the Peptidase M12B domain. 7 cysteine pairs are disulfide-bonded: Cys296–Cys379, Cys338–Cys363, Cys340–Cys345, Cys456–Cys476, Cys623–Cys635, Cys629–Cys641, and Cys643–Cys652. In terms of domain architecture, Disintegrin spans 395–484 (GSYCGNHLLE…GCAPDTKAAD (90 aa)). The EGF-like domain maps to 619-653 (GTRECEADDKCQGHGICNNLNNCQCESGFAPPECD). A helical membrane pass occupies residues 689–709 (VLLISFYILLPFLVVLAFMAV).

Interacts with LY6K. Interacts with TEX101. In terms of processing, initially synthesized as a 110-kDa precursor in round spermatids, and the precursor is then processed into a 42-kDa mature protein during the sperm transport into and/or once in the epididymis. Expressed in sperm (at protein level).

It localises to the cell membrane. In terms of biological role, involved in fertilization by controlling sperm migration into the oviduct. Promotes the binding of sperm to the oocyte zona pellucida. This Mus musculus (Mouse) protein is A disintegrin and metallopeptidase domain 3.